Consider the following 241-residue polypeptide: Phosphoribosylaminoimidazole-succinocarboxamide synthase (241 aa).

Belongs to the SAICAR synthetase family.

The catalysed reaction is 5-amino-1-(5-phospho-D-ribosyl)imidazole-4-carboxylate + L-aspartate + ATP = (2S)-2-[5-amino-1-(5-phospho-beta-D-ribosyl)imidazole-4-carboxamido]succinate + ADP + phosphate + 2 H(+). The protein operates within purine metabolism; IMP biosynthesis via de novo pathway; 5-amino-1-(5-phospho-D-ribosyl)imidazole-4-carboxamide from 5-amino-1-(5-phospho-D-ribosyl)imidazole-4-carboxylate: step 1/2. The polypeptide is Phosphoribosylaminoimidazole-succinocarboxamide synthase (purC) (Bacillus subtilis (strain 168)).